A 188-amino-acid polypeptide reads, in one-letter code: Elongation factor P-like protein (188 aa).

It belongs to the elongation factor P family.

The chain is Elongation factor P-like protein from Xylella fastidiosa (strain M23).